The sequence spans 111 residues: Flagellar hook-basal body complex protein FliE (111 aa).

The protein belongs to the FliE family.

The protein resides in the bacterial flagellum basal body. The sequence is that of Flagellar hook-basal body complex protein FliE from Brucella ovis (strain ATCC 25840 / 63/290 / NCTC 10512).